We begin with the raw amino-acid sequence, 105 residues long: Pyrimidine/purine nucleoside phosphorylase (105 aa).

This sequence belongs to the nucleoside phosphorylase PpnP family.

It carries out the reaction a purine D-ribonucleoside + phosphate = a purine nucleobase + alpha-D-ribose 1-phosphate. It catalyses the reaction adenosine + phosphate = alpha-D-ribose 1-phosphate + adenine. The enzyme catalyses cytidine + phosphate = cytosine + alpha-D-ribose 1-phosphate. The catalysed reaction is guanosine + phosphate = alpha-D-ribose 1-phosphate + guanine. It carries out the reaction inosine + phosphate = alpha-D-ribose 1-phosphate + hypoxanthine. It catalyses the reaction thymidine + phosphate = 2-deoxy-alpha-D-ribose 1-phosphate + thymine. The enzyme catalyses uridine + phosphate = alpha-D-ribose 1-phosphate + uracil. The catalysed reaction is xanthosine + phosphate = alpha-D-ribose 1-phosphate + xanthine. Catalyzes the phosphorolysis of diverse nucleosides, yielding D-ribose 1-phosphate and the respective free bases. Can use uridine, adenosine, guanosine, cytidine, thymidine, inosine and xanthosine as substrates. Also catalyzes the reverse reactions. The polypeptide is Pyrimidine/purine nucleoside phosphorylase (Paracidovorax citrulli (strain AAC00-1) (Acidovorax citrulli)).